The sequence spans 471 residues: Ribosomal protein uS12 methylthiotransferase RimO (471 aa).

Residues Pro-19–Pro-134 enclose the MTTase N-terminal domain. [4Fe-4S] cluster is bound by residues Cys-28, Cys-64, Cys-93, Cys-169, Cys-173, and Cys-176. Residues Leu-155 to Ala-396 enclose the Radical SAM core domain. In terms of domain architecture, TRAM spans Gln-399–Val-471.

Belongs to the methylthiotransferase family. RimO subfamily. [4Fe-4S] cluster serves as cofactor.

The protein localises to the cytoplasm. It carries out the reaction L-aspartate(89)-[ribosomal protein uS12]-hydrogen + (sulfur carrier)-SH + AH2 + 2 S-adenosyl-L-methionine = 3-methylsulfanyl-L-aspartate(89)-[ribosomal protein uS12]-hydrogen + (sulfur carrier)-H + 5'-deoxyadenosine + L-methionine + A + S-adenosyl-L-homocysteine + 2 H(+). Functionally, catalyzes the methylthiolation of an aspartic acid residue of ribosomal protein uS12. The polypeptide is Ribosomal protein uS12 methylthiotransferase RimO (Delftia acidovorans (strain DSM 14801 / SPH-1)).